The following is a 688-amino-acid chain: Translation initiation factor IF-2 (688 aa).

Composition is skewed to basic and acidic residues over residues 53 to 62 (GKEKSEKTKE) and 86 to 95 (KRDDKNEKVN). The segment at 53–100 (GKEKSEKTKEEDDEIETTAKNPIKESMNNKKSNKRDDKNEKVNTENAE) is disordered. The 168-residue stretch at 187 to 354 (KRSPIITVMG…MILLSSEILE (168 aa)) folds into the tr-type G domain. The segment at 196–203 (GHVDHGKT) is G1. A GTP-binding site is contributed by 196-203 (GHVDHGKT). The G2 stretch occupies residues 221-225 (GITQH). The interval 242-245 (DTPG) is G3. GTP-binding positions include 242-246 (DTPGH) and 296-299 (NKID). The interval 296 to 299 (NKID) is G4. Positions 332–334 (SAH) are G5.

It belongs to the TRAFAC class translation factor GTPase superfamily. Classic translation factor GTPase family. IF-2 subfamily.

The protein localises to the cytoplasm. Functionally, one of the essential components for the initiation of protein synthesis. Protects formylmethionyl-tRNA from spontaneous hydrolysis and promotes its binding to the 30S ribosomal subunits. Also involved in the hydrolysis of GTP during the formation of the 70S ribosomal complex. This chain is Translation initiation factor IF-2, found in Clostridium botulinum (strain Loch Maree / Type A3).